The sequence spans 107 residues: BolA-like protein 3 (107 aa).

The protein belongs to the BolA/IbaG family. Interacts with NFU1. As to expression, widely expressed.

Its subcellular location is the mitochondrion. In terms of biological role, acts as a mitochondrial iron-sulfur (Fe-S) cluster assembly factor that facilitates (Fe-S) cluster insertion into a subset of mitochondrial proteins. Probably acts together with NFU1. The polypeptide is BolA-like protein 3 (Homo sapiens (Human)).